Reading from the N-terminus, the 546-residue chain is Pectinesterase 1 (546 aa).

The N-terminal stretch at 1–39 (MANPQQPLLIKTHKQNPIISFKILSFVITLFVALFLVAP) is a signal peptide. Residues 40–229 (YQVEIKHSNL…RKLMESSGKD (190 aa)) constitute a propeptide that is removed on maturation. Substrate contacts are provided by Thr-308 and Gln-338. A disulfide bridge links Cys-327 with Cys-354. The active-site Proton donor is the Asp-361. Catalysis depends on Asp-382, which acts as the Nucleophile. The cysteines at positions 395 and 429 are disulfide-linked. The substrate site is built by Arg-450 and Trp-452.

In the N-terminal section; belongs to the PMEI family. This sequence in the C-terminal section; belongs to the pectinesterase family.

It localises to the secreted. The protein resides in the cell wall. The catalysed reaction is [(1-&gt;4)-alpha-D-galacturonosyl methyl ester](n) + n H2O = [(1-&gt;4)-alpha-D-galacturonosyl](n) + n methanol + n H(+). It participates in glycan metabolism; pectin degradation; 2-dehydro-3-deoxy-D-gluconate from pectin: step 1/5. Pectinesterase may play a role in cell wall metabolism during fruit growth and development prior to ripening and may be required for preparing cell walls for softening by polygalacturonase during fruit ripening. This chain is Pectinesterase 1 (PME1.9), found in Solanum lycopersicum (Tomato).